The sequence spans 1237 residues: Putative structural protein VP3 (1237 aa).

One can recognise a PPPDE domain in the interval 963–1178 (GFLDKRVGDA…WDVSTAARMQ (216 aa)). Active-site residues include H1001 and C1149.

The protein resides in the virion. The chain is Putative structural protein VP3 (S3) from Lymantria dispar cypovirus 1 (isolate Rao) (LdCPV-1).